Reading from the N-terminus, the 37-residue chain is Large ribosomal subunit protein bL36c (37 aa).

The protein belongs to the bacterial ribosomal protein bL36 family.

Its subcellular location is the plastid. The protein localises to the chloroplast. This chain is Large ribosomal subunit protein bL36c, found in Adiantum capillus-veneris (Maidenhair fern).